Consider the following 669-residue polypeptide: Carnitine O-palmitoyltransferase 2, mitochondrial (669 aa).

A mitochondrion-targeting transit peptide spans 1–36 (MMAGLLSTQCNSTLSKLKHLSNNPALSVLTSTHRKY). Topologically, residues 37 to 190 (SSKDGAGSEY…GLLEPEVFHL (154 aa)) are mitochondrial matrix. The segment at residues 191-220 (NPAKSDTDSFKKLIRWVPPSISWFGAYMVN) is an intramembrane region (note=Mitochondrial inner membrane). Topologically, residues 221–669 (AYPLDMSQYF…FTVLDGNPIH (449 aa)) are mitochondrial matrix. The active-site Proton acceptor is His-384. A CoA-binding site is contributed by 464 to 476 (GKEQLKKKKLSPD). Residues Tyr-498, Ser-500, and Thr-511 each contribute to the (R)-carnitine site.

Belongs to the carnitine/choline acetyltransferase family.

The protein resides in the mitochondrion inner membrane. It catalyses the reaction (R)-carnitine + hexadecanoyl-CoA = O-hexadecanoyl-(R)-carnitine + CoA. The catalysed reaction is octanoyl-CoA + (R)-carnitine = O-octanoyl-(R)-carnitine + CoA. The enzyme catalyses decanoyl-CoA + (R)-carnitine = O-decanoyl-(R)-carnitine + CoA. It carries out the reaction dodecanoyl-CoA + (R)-carnitine = O-dodecanoyl-R-carnitine + CoA. It catalyses the reaction tetradecanoyl-CoA + (R)-carnitine = O-tetradecanoyl-(R)-carnitine + CoA. The catalysed reaction is (R)-carnitine + octadecanoyl-CoA = O-octadecanoyl-(R)-carnitine + CoA. The enzyme catalyses eicosanoyl-CoA + (R)-carnitine = O-eicosanoyl-(R)-carnitine + CoA. It carries out the reaction (9Z)-tetradecenoyl-CoA + (R)-carnitine = O-(9Z)-tetradecenoyl-(R)-carnitine + CoA. It catalyses the reaction (5Z)-tetradecenoyl-CoA + (R)-carnitine = O-(5Z)-tetradecenoyl-(R)-carnitine + CoA. The catalysed reaction is (R)-carnitine + (9Z)-octadecenoyl-CoA = O-(9Z)-octadecenoyl-(R)-carnitine + CoA. The enzyme catalyses 4,8-dimethylnonanoyl-CoA + (R)-carnitine = O-4,8-dimethylnonanoyl-(R)-carnitine + CoA. It participates in lipid metabolism; fatty acid beta-oxidation. Its function is as follows. Involved in the intramitochondrial synthesis of acylcarnitines from accumulated acyl-CoA metabolites. Reconverts acylcarnitines back into the respective acyl-CoA esters that can then undergo beta-oxidation, an essential step for the mitochondrial uptake of long-chain fatty acids and their subsequent beta-oxidation in the mitochondrion. Active with medium (C8-C12) and long-chain (C14-C18) acyl-CoA esters. In Danio rerio (Zebrafish), this protein is Carnitine O-palmitoyltransferase 2, mitochondrial (cpt2).